Consider the following 103-residue polypeptide: Small ubiquitin-related modifier 2 (103 aa).

The Ubiquitin-like domain occupies 15–92 (AHINLKVKGQ…IDAMLHQTGG (78 aa)). Residue glycine 92 forms a Glycyl lysine isopeptide (Gly-Lys) (interchain with K-? in acceptor proteins) linkage.

It belongs to the ubiquitin family. SUMO subfamily. In terms of assembly, interacts with SAE2, SCE1, SIZ1 and MMS21. Interacts with HSFA2. Covalently attached to ABI5, FLD, GTE3, HSFA2 and ICE1.

It is found in the nucleus. The protein localises to the cytoplasm. Functionally, ubiquitin-like protein which can be covalently attached to target lysines as a monomer. Does not seem to be involved in protein degradation and may function as an antagonist of ubiquitin in the degradation process. Required for the massive protein sumoylation in the nucleus induced by heat shock and controlled by SIZ1. In Arabidopsis thaliana (Mouse-ear cress), this protein is Small ubiquitin-related modifier 2.